The following is a 168-amino-acid chain: MLAMMLNTTLSACFLSLLALTSACYFQNCPRGGKRATSDMELRQCLPCGPGGKGRCFGPSICCADELGCFLGTAEALRCQEENYLPSPCQSGQKPCGSGGRCAAAGICCSDESCVAEPECREGFFRLTRAREQSNATQLDGPARELLLRLVQLAGTQESVDSAKPRVY.

Residues 1–23 (MLAMMLNTTLSACFLSLLALTSA) form the signal peptide. C24 and C29 form a disulfide bridge. Glycine amide is present on G32. 7 cysteine pairs are disulfide-bonded: C45–C89, C48–C62, C56–C79, C63–C69, C96–C108, C102–C120, and C109–C114. N-linked (GlcNAc...) asparagine glycosylation occurs at N135.

The protein belongs to the vasopressin/oxytocin family. As to quaternary structure, interacts with vasopressin receptors V1bR/AVPR1B (Ki=85 pM), V1aR/AVPR1A (Ki=0.6 nM) and V2R/AVPR2 (Ki=4.9 nM). Interacts with oxytocin receptor (OXTR) (Ki=110 nM).

Its subcellular location is the secreted. Its function is as follows. Neurophysin 2 specifically binds vasopressin. Functionally, vasopressin has a direct antidiuretic action on the kidney, it also causes vasoconstriction of the peripheral vessels. Acts by binding to vasopressin receptors (V1bR/AVPR1B, V1aR/AVPR1A, and V2R/AVPR2). The polypeptide is Vasopressin-neurophysin 2-copeptin (Avp) (Rattus norvegicus (Rat)).